Here is a 1097-residue protein sequence, read N- to C-terminus: Cyclin-T (1097 aa).

Disordered regions lie at residues 319 to 782 (SNIT…SNGI), 804 to 936 (LLKP…SLQA), and 985 to 1097 (AAPV…YNKK). Basic and acidic residues predominate over residues 332 to 350 (DSRDRDRDRERERERERDP). Composition is skewed to low complexity over residues 373-390 (SSSV…SSSS), 420-456 (PSSH…GRPS), 467-478 (GMPPVGVGMPPH), and 489-511 (PQQP…SGMS). Residues 580-591 (LPYSQSQSYGHM) show a composition bias toward polar residues. Residues 592 to 606 (QQQPVPQSQQQQMPP) are compositionally biased toward low complexity. The span at 609–620 (SQHSLQSKNSLF) shows a compositional bias: polar residues. Residues 652 to 675 (HDYKLNSHPRDKESPKKERLTPTK) are compositionally biased toward basic and acidic residues. A compositionally biased stretch (low complexity) spans 687 to 698 (GSGNSSSGSGSS). Positions 860 to 870 (GEIKEESSSKS) are enriched in basic and acidic residues. Residues 871–883 (EKKKKKDKHKHKE) are compositionally biased toward basic residues. Residues 884–895 (KDKSKDKTEKEE) show a composition bias toward basic and acidic residues. Position 916 is a phosphoserine (Ser-916). A compositionally biased stretch (gly residues) spans 993 to 1007 (GAGGGGYSSSGGSSS). The segment covering 1016–1031 (SDRDRDKESKKNKSQD) has biased composition (basic and acidic residues). Residues 1037 to 1050 (GAGGGIFNPLGGAG) are compositionally biased toward gly residues. Positions 1087–1097 (APPPMPVYNKK) are enriched in pro residues.

It belongs to the cyclin family. Cyclin C subfamily. In terms of assembly, component of the super elongation complex (SEC), at least composed of Ell, Cdk9, cyclin-T (CycT), lilli and ear. Associates with CDK9 to form P-TEFb.

Its subcellular location is the nucleus. Its function is as follows. Regulatory subunit of the cyclin-dependent kinase pair (CDK9/cyclin T) complex, also called positive transcription elongation factor B (P-TEFb), which is proposed to facilitate the transition from abortive to production elongation by phosphorylating the CTD (carboxy-terminal domain) of the large subunit of RNA polymerase II (RNAP II). The chain is Cyclin-T (CycT) from Drosophila melanogaster (Fruit fly).